A 495-amino-acid chain; its full sequence is Glycerol kinase (495 aa).

An ADP-binding site is contributed by Thr16. ATP contacts are provided by Thr16 and Thr17. Residue Thr16 participates in sn-glycerol 3-phosphate binding. Arg20 contributes to the ADP binding site. Sn-glycerol 3-phosphate is bound by residues Arg86, Glu87, Tyr138, and Asp246. Arg86, Glu87, Tyr138, Asp246, and Gln247 together coordinate glycerol. Residues Thr268 and Gly316 each coordinate ADP. Residues Thr268, Gly316, Gln320, and Gly417 each contribute to the ATP site. Gly417 and Asn421 together coordinate ADP.

It belongs to the FGGY kinase family.

It catalyses the reaction glycerol + ATP = sn-glycerol 3-phosphate + ADP + H(+). The protein operates within polyol metabolism; glycerol degradation via glycerol kinase pathway; sn-glycerol 3-phosphate from glycerol: step 1/1. Inhibited by fructose 1,6-bisphosphate (FBP). Its function is as follows. Key enzyme in the regulation of glycerol uptake and metabolism. Catalyzes the phosphorylation of glycerol to yield sn-glycerol 3-phosphate. This Synechocystis sp. (strain ATCC 27184 / PCC 6803 / Kazusa) protein is Glycerol kinase.